The chain runs to 187 residues: Resolvase OPG149 (187 aa).

Belongs to the RuvC family. Poxviruses-type subfamily. Mg(2+) is required as a cofactor.

Plays a role in DNA replication by cleaving viral DNA concatamers to yield unit-length viral genomes. The concatamer junctions contain inverted repeat sequences that can be extruded as cruciforms, yielding Holliday junctions that A22 protein cleaves. The sequence is that of Resolvase OPG149 (OPG149) from Vaccinia virus (strain Western Reserve) (VACV).